Here is a 471-residue protein sequence, read N- to C-terminus: Trigger factor (471 aa).

Residues 174–261 enclose the PPIase FKBP-type domain; sequence GDVAVVSFEG…VKDLKTRELP (88 aa). A compositionally biased stretch (polar residues) spans 436-446; sequence ETLPKTKSLNG. A disordered region spans residues 436–471; that stretch reads ETLPKTKSLNGKPSTQGKTSQSKSKKTKTKVEKTTK. Positions 447–457 are enriched in low complexity; that stretch reads KPSTQGKTSQS.

The protein belongs to the FKBP-type PPIase family. Tig subfamily.

It is found in the cytoplasm. It catalyses the reaction [protein]-peptidylproline (omega=180) = [protein]-peptidylproline (omega=0). Its function is as follows. Involved in protein export. Acts as a chaperone by maintaining the newly synthesized protein in an open conformation. Functions as a peptidyl-prolyl cis-trans isomerase. This is Trigger factor from Prochlorococcus marinus (strain MIT 9211).